The following is a 385-amino-acid chain: Leucine aminopeptidase 1 (385 aa).

An N-terminal signal peptide occupies residues 1 to 19; that stretch reads MKFPSFLSLGIAASTTALA. Residues 20–87 constitute a propeptide that is removed on maturation; sequence ALPDQKPIGD…FPRAFAKTAV (68 aa). N-linked (GlcNAc...) asparagine glycosylation occurs at asparagine 177. Histidine 185 and aspartate 204 together coordinate Zn(2+). The N-linked (GlcNAc...) asparagine glycan is linked to asparagine 229. Zn(2+)-binding residues include glutamate 243 and aspartate 270. Cysteine 319 and cysteine 323 are disulfide-bonded. Histidine 352 contributes to the Zn(2+) binding site.

This sequence belongs to the peptidase M28 family. M28E subfamily. As to quaternary structure, monomer. Requires Zn(2+) as cofactor.

It is found in the secreted. Extracellular aminopeptidase that allows assimilation of proteinaceous substrates. The polypeptide is Leucine aminopeptidase 1 (LAP1) (Ajellomyces dermatitidis (strain ER-3 / ATCC MYA-2586) (Blastomyces dermatitidis)).